The chain runs to 349 residues: Probable trehalose-phosphate phosphatase H (349 aa).

This sequence belongs to the trehalose phosphatase family. A divalent metal cation serves as cofactor.

It catalyses the reaction alpha,alpha-trehalose 6-phosphate + H2O = alpha,alpha-trehalose + phosphate. It functions in the pathway glycan biosynthesis; trehalose biosynthesis. Its function is as follows. Removes the phosphate from trehalose 6-phosphate to produce free trehalose. Trehalose accumulation in plant may improve abiotic stress tolerance. This Arabidopsis thaliana (Mouse-ear cress) protein is Probable trehalose-phosphate phosphatase H (TPPH).